Reading from the N-terminus, the 66-residue chain is Surface composition regulator (66 aa).

The protein belongs to the GlgS family.

Major determinant of cell surface composition. Negatively regulates motility, adhesion and synthesis of biofilm exopolysaccharides. The chain is Surface composition regulator from Shigella flexneri.